We begin with the raw amino-acid sequence, 72 residues long: UPF0154 protein lhv_1362 (72 aa).

The helical transmembrane segment at 3-23 (LGLAIFLIIIALLVGAVAGFY) threads the bilayer.

This sequence belongs to the UPF0154 family.

Its subcellular location is the cell membrane. The protein is UPF0154 protein lhv_1362 of Lactobacillus helveticus (strain DPC 4571).